Consider the following 58-residue polypeptide: Small ribosomal subunit protein bS21 (58 aa).

The tract at residues 36–58 (EFYEKPSVKRKRKSEAARKRKKF) is disordered. The span at 43 to 58 (VKRKRKSEAARKRKKF) shows a compositional bias: basic residues.

It belongs to the bacterial ribosomal protein bS21 family.

The chain is Small ribosomal subunit protein bS21 from Streptococcus uberis (strain ATCC BAA-854 / 0140J).